A 214-amino-acid polypeptide reads, in one-letter code: Membrane antigen containing repeating peptides (214 aa).

4 consecutive repeat copies span residues 1–14 (QETSAKLADTEETL), 15–28 (QETSAKLADTEETL), 29–42 (QETSAKLADTEETL), and 43–56 (QETSAKLADTEETL). Positions 1–31 (QETSAKLADTEETLQETSAKLADTEETLQET) are disordered. Residues 1–56 (QETSAKLADTEETLQETSAKLADTEETLQETSAKLADTEETLQETSAKLADTEETL) form a 4 X 14 AA tandem repeats region. The segment at 180-214 (CSLHPTPRRLGDVSNRENSIENKTRSASRLSGRLF) is disordered. Residues 188-203 (RLGDVSNRENSIENKT) are compositionally biased toward basic and acidic residues.

The protein resides in the membrane. This chain is Membrane antigen containing repeating peptides, found in Leishmania major.